We begin with the raw amino-acid sequence, 375 residues long: Alpha-2,8-sialyltransferase 8B (375 aa).

Residues 1-6 (MQLQFR) lie on the Cytoplasmic side of the membrane. Residues 7-23 (SWMLAALTLLVVFLIFA) form a helical; Signal-anchor for type II membrane protein membrane-spanning segment. Topologically, residues 24–375 (DISEIEEEIG…LTVGQCDGAT (352 aa)) are lumenal. Residues Asn60, Asn72, Asn89, and Asn134 are each glycosylated (N-linked (GlcNAc...) asparagine). 2 disulfide bridges follow: Cys157–Cys307 and Cys171–Cys371. 2 residues coordinate CMP-N-acetyl-beta-neuraminate: Asn162 and Asn185. N-linked (GlcNAc...) asparagine glycosylation is found at Asn219 and Asn234. CMP-N-acetyl-beta-neuraminate is bound by residues Thr294, Thr295, Gly296, Trp316, Tyr329, and His330. His346 serves as the catalytic Proton donor/acceptor.

The protein belongs to the glycosyltransferase 29 family. In terms of processing, autopolysialylated. Autopolysialylation is not a prerequisite for the polysialylation acitity, but enhances the polysialylation acitity. As to expression, expressed only in newborn brain.

It is found in the golgi apparatus membrane. The protein resides in the secreted. It localises to the cell membrane. It carries out the reaction [N-acetyl-alpha-D-neuraminosyl-(2-&gt;8)](n) + CMP-N-acetyl-beta-neuraminate = [N-acetyl-alpha-D-neuraminosyl-(2-&gt;8)](n+1) + CMP + H(+). The protein operates within protein modification; protein glycosylation. Functionally, catalyzes the transfer of a sialic acid from a CMP-linked sialic acid donor onto a terminal alpha-2,3-, alpha-2,6-, or alpha-2,8-linked sialic acid of an N-linked glycan acceptor through alpha-2,8-linkages. Therefore, participates in polysialic acid synthesis on various sialylated N-acetyllactosaminyl oligosaccharides (alpha-2,3-, alpha-2,6-, or alpha-2,8-linked sialic acid), including NCAM1, NCAM1 N-glycans, FETUB N-glycans, and to a lesser extent sialylparagloboside (SPG) and AHSG, which does not require the initial addition of an alpha 2,8-sialic acid. However, does not exhibit sialic acid-polymerase activity. Catalyzes polysialic acid synthesis in the hippocampal on NCAM1 and supports neurite outgrowth. ST8SIA2-mediated polysialylation influences on oligodendrocyte differentiation and may promote the integrity of myelin and axons. The protein is Alpha-2,8-sialyltransferase 8B of Rattus norvegicus (Rat).